The sequence spans 339 residues: MFVDIYDQLYISYAAVVSTLGIIFNGFLLFLIFFKSPSCLTPYTVFLANTSITQLGYCICFLLTVPRVISINLRIVNIYLGFSQFLGHWWSYMIFTTMLHFAVNSFLSIMLSMVFRCISLKTLRFPTSGAFAMCILAYMIPLSMVVSIRGIEITSNFTINSKYTLWQLENLDKYRTVVGTTMAQLSTLWVACCVSILCIPIYSVMFWCRYRILRMLERPGYMFNTTTTLQIKRLVKALTVQSLIPVFTLFPASLIFLSTQFHVIETTKFGYIIISLLSLSPTIDPLVTIYYVQPYRKYIVDLLWSEERPMVSPFLSNNDPRFYRSRSNSVLMMRNTHFV.

7 consecutive transmembrane segments (helical) span residues 14–34, 45–65, 94–114, 128–148, 188–208, 237–257, and 269–289; these read AAVV…LIFF, VFLA…LLTV, IFTT…LSMV, SGAF…VVSI, LWVA…MFWC, ALTV…LIFL, and FGYI…LVTI.

The protein belongs to the nematode receptor-like protein srd family.

It localises to the membrane. The chain is Serpentine receptor class delta-32 (srd-32) from Caenorhabditis elegans.